Reading from the N-terminus, the 364-residue chain is DNA polymerase IV (364 aa).

Residues 14 to 198 (IIHIDMDAFF…LPIEKFHGVG (185 aa)) form the UmuC domain. Residues D18 and D116 each contribute to the Mg(2+) site. The active site involves E117.

This sequence belongs to the DNA polymerase type-Y family. In terms of assembly, monomer. Mg(2+) is required as a cofactor.

It is found in the cytoplasm. The enzyme catalyses DNA(n) + a 2'-deoxyribonucleoside 5'-triphosphate = DNA(n+1) + diphosphate. Its function is as follows. Poorly processive, error-prone DNA polymerase involved in untargeted mutagenesis. Copies undamaged DNA at stalled replication forks, which arise in vivo from mismatched or misaligned primer ends. These misaligned primers can be extended by PolIV. Exhibits no 3'-5' exonuclease (proofreading) activity. May be involved in translesional synthesis, in conjunction with the beta clamp from PolIII. The sequence is that of DNA polymerase IV from Streptococcus pyogenes serotype M6 (strain ATCC BAA-946 / MGAS10394).